The primary structure comprises 575 residues: Arginine--tRNA ligase (575 aa).

The short motif at 136 to 146 (ANPTGPLHVGH) is the 'HIGH' region element.

It belongs to the class-I aminoacyl-tRNA synthetase family. As to quaternary structure, monomer.

It is found in the cytoplasm. It carries out the reaction tRNA(Arg) + L-arginine + ATP = L-arginyl-tRNA(Arg) + AMP + diphosphate. The protein is Arginine--tRNA ligase of Polynucleobacter necessarius subsp. necessarius (strain STIR1).